A 162-amino-acid chain; its full sequence is MFVPAVVFAALASTSAWANNGDTAQPLEKIAPYPQAEKGMKRQVITLTPQQDESTLKVELLIGQTLNVDCNQHRLGGTLETKTLEGWGYDYYVFDNVTSPVSTMMACPDGKKEQKFVTAWLGEDGMVRYNSKLPIVVYTPANVDVKYRIWKADANVQNAVAR.

Positions 1-18 are cleaved as a signal peptide; that stretch reads MFVPAVVFAALASTSAWA. The cysteines at positions 70 and 107 are disulfide-linked.

The protein belongs to the protease inhibitor I11 (ecotin) family. Homodimer.

Its subcellular location is the periplasm. In terms of biological role, general inhibitor of pancreatic serine proteases: inhibits chymotrypsin, trypsin, elastases, factor X, kallikrein as well as a variety of other proteases. This chain is Ecotin, found in Salmonella choleraesuis (strain SC-B67).